The primary structure comprises 352 residues: Phenylalanine--tRNA ligase alpha subunit (352 aa).

Glu258 serves as a coordination point for Mg(2+).

Belongs to the class-II aminoacyl-tRNA synthetase family. Phe-tRNA synthetase alpha subunit type 1 subfamily. In terms of assembly, tetramer of two alpha and two beta subunits. Requires Mg(2+) as cofactor.

It is found in the cytoplasm. It carries out the reaction tRNA(Phe) + L-phenylalanine + ATP = L-phenylalanyl-tRNA(Phe) + AMP + diphosphate + H(+). This chain is Phenylalanine--tRNA ligase alpha subunit, found in Staphylococcus carnosus (strain TM300).